A 405-amino-acid polypeptide reads, in one-letter code: Probable tRNA sulfurtransferase (405 aa).

In terms of domain architecture, THUMP spans 60–165; that stretch reads DQVMARLSQV…REAIYLSTKT (106 aa). ATP-binding positions include 183-184, 208-209, arginine 265, glycine 287, and glutamine 296; these read ML and HF.

It belongs to the ThiI family.

The protein localises to the cytoplasm. It carries out the reaction [ThiI sulfur-carrier protein]-S-sulfanyl-L-cysteine + a uridine in tRNA + 2 reduced [2Fe-2S]-[ferredoxin] + ATP + H(+) = [ThiI sulfur-carrier protein]-L-cysteine + a 4-thiouridine in tRNA + 2 oxidized [2Fe-2S]-[ferredoxin] + AMP + diphosphate. The catalysed reaction is [ThiS sulfur-carrier protein]-C-terminal Gly-Gly-AMP + S-sulfanyl-L-cysteinyl-[cysteine desulfurase] + AH2 = [ThiS sulfur-carrier protein]-C-terminal-Gly-aminoethanethioate + L-cysteinyl-[cysteine desulfurase] + A + AMP + 2 H(+). Its pathway is cofactor biosynthesis; thiamine diphosphate biosynthesis. In terms of biological role, catalyzes the ATP-dependent transfer of a sulfur to tRNA to produce 4-thiouridine in position 8 of tRNAs, which functions as a near-UV photosensor. Also catalyzes the transfer of sulfur to the sulfur carrier protein ThiS, forming ThiS-thiocarboxylate. This is a step in the synthesis of thiazole, in the thiamine biosynthesis pathway. The sulfur is donated as persulfide by IscS. The protein is Probable tRNA sulfurtransferase of Lacticaseibacillus paracasei (strain ATCC 334 / BCRC 17002 / CCUG 31169 / CIP 107868 / KCTC 3260 / NRRL B-441) (Lactobacillus paracasei).